Consider the following 262-residue polypeptide: Ribosomal RNA small subunit methyltransferase A (262 aa).

S-adenosyl-L-methionine contacts are provided by Ile18, Gly43, Glu65, Asp91, and Asn110.

This sequence belongs to the class I-like SAM-binding methyltransferase superfamily. rRNA adenine N(6)-methyltransferase family. RsmA subfamily.

Its subcellular location is the cytoplasm. It carries out the reaction adenosine(1518)/adenosine(1519) in 16S rRNA + 4 S-adenosyl-L-methionine = N(6)-dimethyladenosine(1518)/N(6)-dimethyladenosine(1519) in 16S rRNA + 4 S-adenosyl-L-homocysteine + 4 H(+). Its function is as follows. Specifically dimethylates two adjacent adenosines (A1518 and A1519) in the loop of a conserved hairpin near the 3'-end of 16S rRNA in the 30S particle. May play a critical role in biogenesis of 30S subunits. This chain is Ribosomal RNA small subunit methyltransferase A, found in Ehrlichia canis (strain Jake).